A 387-amino-acid chain; its full sequence is 3-ketoacyl-CoA thiolase (387 aa).

Cys91 acts as the Acyl-thioester intermediate in catalysis. Catalysis depends on proton acceptor residues His343 and Cys373.

It belongs to the thiolase-like superfamily. Thiolase family. Heterotetramer of two alpha chains (FadB) and two beta chains (FadA).

The protein resides in the cytoplasm. The catalysed reaction is an acyl-CoA + acetyl-CoA = a 3-oxoacyl-CoA + CoA. The protein operates within lipid metabolism; fatty acid beta-oxidation. Functionally, catalyzes the final step of fatty acid oxidation in which acetyl-CoA is released and the CoA ester of a fatty acid two carbons shorter is formed. The polypeptide is 3-ketoacyl-CoA thiolase (Shewanella sp. (strain ANA-3)).